A 658-amino-acid chain; its full sequence is Glycogen debranching enzyme (658 aa).

Aspartate 336 (nucleophile) is an active-site residue. Catalysis depends on glutamate 371, which acts as the Proton donor. The interval 459–483 (EANGEENRDGTNSNYSDNHGKEGLG) is disordered.

It belongs to the glycosyl hydrolase 13 family.

The enzyme catalyses Hydrolysis of (1-&gt;6)-alpha-D-glucosidic linkages to branches with degrees of polymerization of three or four glucose residues in limit dextrin.. The protein operates within glycan degradation; glycogen degradation. Functionally, removes maltotriose and maltotetraose chains that are attached by 1,6-alpha-linkage to the limit dextrin main chain, generating a debranched limit dextrin. This chain is Glycogen debranching enzyme, found in Salmonella agona (strain SL483).